The sequence spans 349 residues: Protein RecA (349 aa).

69–76 (GPESSGKT) provides a ligand contact to ATP.

It belongs to the RecA family.

Its subcellular location is the cytoplasm. Can catalyze the hydrolysis of ATP in the presence of single-stranded DNA, the ATP-dependent uptake of single-stranded DNA by duplex DNA, and the ATP-dependent hybridization of homologous single-stranded DNAs. It interacts with LexA causing its activation and leading to its autocatalytic cleavage. The protein is Protein RecA of Crocosphaera subtropica (strain ATCC 51142 / BH68) (Cyanothece sp. (strain ATCC 51142)).